The chain runs to 1499 residues: Rho GTPase-activating protein 35 (1499 aa).

Positions 1–266 (MMMARKQDVR…IPYFEALKQQ (266 aa)) are has GTPase activity, required for proper localization. GTP contacts are provided by residues lysine 28, 33 to 37 (IGKSC), leucine 52, serine 56, 95 to 97 (EQT), 201 to 203 (KCD), and 229 to 231 (SAR). FF domains follow at residues 270–327 (IATA…HIHR), 368–422 (KLLE…HLEK), 429–483 (RAEM…HQKQ), and 485–550 (IDRA…HIHF). Residue tyrosine 308 is modified to Phosphotyrosine. At serine 589 the chain carries Phosphoserine. The region spanning 592–767 (DLNIDRINLV…LLDSKRNLNL (176 aa)) is the pG1 pseudoGTPase domain. A phosphoserine mark is found at serine 770 and serine 773. In terms of domain architecture, pG2 pseudoGTPase spans 783–947 (RIVMCLMCGD…FKDVVEKKNI (165 aa)). A phosphoserine mark is found at serine 970, serine 975, serine 985, and serine 1072. Tyrosine 1087 is subject to Phosphotyrosine. Residue tyrosine 1105 is modified to Phosphotyrosine; by ABL2 and PTK6. Residues 1124 to 1141 (KAQSNGSGNGSDSEMDTS) show a composition bias toward polar residues. The interval 1124-1148 (KAQSNGSGNGSDSEMDTSSLERGRK) is disordered. A phosphoserine mark is found at serine 1134, serine 1142, serine 1150, serine 1176, serine 1179, and serine 1221. A disordered region spans residues 1177-1207 (VGSDDELGPIRKKEEDQASQGYKGDNAVIPY). The segment at 1213 to 1236 (PRRRNILRSLRRNTKKPKPKPRPS) is required for phospholipid binding and regulation of the substrate preference. Residue threonine 1226 is modified to Phosphothreonine. Serine 1236 is modified (phosphoserine). In terms of domain architecture, Rho-GAP spans 1249–1436 (VPLTTVVTPE…LFIQQCPFFF (188 aa)). Positions 1446–1499 (GAAPGSPSAMAPTVPFLTSTPATSQPSPPQSPPPTPQSPMQPLLSSQLQAEHTL) are disordered. Residues 1448–1470 (APGSPSAMAPTVPFLTSTPATSQ) show a composition bias toward low complexity. A compositionally biased stretch (pro residues) spans 1471 to 1484 (PSPPQSPPPTPQSP). Serine 1472 and serine 1476 each carry phosphoserine. Threonine 1480 is modified (phosphothreonine). Serine 1483 carries the phosphoserine modification. Residues 1485–1499 (MQPLLSSQLQAEHTL) show a composition bias toward low complexity.

In terms of assembly, interacts with the general transcription factor GTF2I, the interaction sequesters GTF2I in the cytoplasm. Interacts with RASA1. Phosphorylation of Tyr-1105 by PTK6 promotes the association with RASA1, inactivating RHOA while activating RAS. Phosphorylation at Tyr-308 by PDGFRA inhibits binding to GTF2I. Phosphorylated by PRKCA at Ser-1221 and Thr-1226, induces relocalization from the cytoplasm to regions of plasma membrane ruffling and prevents the binding and substrate specificity regulation by phospholipids. In brain, phosphorylated by FYN and SRC. During focal adhesion formation, phosphorylated by MAPK1 and MAPK3 at the C-terminal region, probably at Ser-1451, Ser-1476, Thr-1480 and Ser-1483. Phosphorylation by MAPK1 and MAPK3 inhibits GAP function and localizes ARGHAP35 away from newly forming focal adhesions and stress fibers in cells spreading on fibronectin. Phosphorylation at Ser-1476 and Thr-1480 by GSK3B requires priming by MAPK and inhibits RhoGAP activity and modulates polarized cell migration. As to expression, expressed in the developing kidneys. Expressed in all regions of the mature nervous system (at protein level). Detected in neutrophils (at protein level).

The protein localises to the cytoplasm. The protein resides in the cytoskeleton. It localises to the cilium basal body. It is found in the nucleus. Its subcellular location is the cell membrane. Rho GTPase-activating protein (GAP). Binds several acidic phospholipids which inhibits the Rho GAP activity to promote the Rac GAP activity. This binding is inhibited by phosphorylation by PRKCA. Involved in cell differentiation as well as cell adhesion and migration, plays an important role in retinal tissue morphogenesis, neural tube fusion, midline fusion of the cerebral hemispheres and mammary gland branching morphogenesis. Transduces signals from p21-ras to the nucleus, acting via the ras GTPase-activating protein (GAP). Transduces SRC-dependent signals from cell-surface adhesion molecules, such as laminin, to promote neurite outgrowth. Regulates axon outgrowth, guidance and fasciculation. Modulates Rho GTPase-dependent F-actin polymerization, organization and assembly, is involved in polarized cell migration and in the positive regulation of ciliogenesis and cilia elongation. During mammary gland development, is required in both the epithelial and stromal compartments for ductal outgrowth. Represses transcription of the glucocorticoid receptor by binding to the cis-acting regulatory sequence 5'-GAGAAAAGAAACTGGAGAAACTC-3'; this function is however unclear and would need additional experimental evidences. In Mus musculus (Mouse), this protein is Rho GTPase-activating protein 35.